Consider the following 124-residue polypeptide: Small ribosomal subunit protein uS12 (124 aa).

Asp89 carries the post-translational modification 3-methylthioaspartic acid.

This sequence belongs to the universal ribosomal protein uS12 family. In terms of assembly, part of the 30S ribosomal subunit. Contacts proteins S8 and S17. May interact with IF1 in the 30S initiation complex.

Its function is as follows. With S4 and S5 plays an important role in translational accuracy. Interacts with and stabilizes bases of the 16S rRNA that are involved in tRNA selection in the A site and with the mRNA backbone. Located at the interface of the 30S and 50S subunits, it traverses the body of the 30S subunit contacting proteins on the other side and probably holding the rRNA structure together. The combined cluster of proteins S8, S12 and S17 appears to hold together the shoulder and platform of the 30S subunit. The polypeptide is Small ribosomal subunit protein uS12 (Shewanella halifaxensis (strain HAW-EB4)).